The sequence spans 549 residues: Cation/acetate symporter ActP (549 aa).

Residues 1–32 (MKRVLTALAATLPFAANAADAISGAVERQPTN) are Periplasmic-facing. Residues 33 to 55 (WQAIIMFLIFVVFTLGITYWASK) form a helical membrane-spanning segment. Residues 56-75 (RVRSRNDYYTAGGNITGFQN) lie on the Cytoplasmic side of the membrane. Residues 76–98 (GLAIAGDYMSAASFLGISALVFT) form a helical membrane-spanning segment. Residues 99–102 (SGYD) are Periplasmic-facing. A helical transmembrane segment spans residues 103 to 125 (GLIYSLGFLVGWPIILFLIAERL). At 126–145 (RNLGRYTFADVASYRLKQGP) the chain is on the cytoplasmic side. Residues 146-168 (IRILSACGSLVVVALYLIAQMVG) traverse the membrane as a helical segment. Topologically, residues 169 to 182 (AGKLIELLFGLNYH) are periplasmic. Residues 183 to 205 (IAVVLVGVLMMMYVLFGGMLATT) traverse the membrane as a helical segment. The Cytoplasmic segment spans residues 206 to 211 (WVQIIK). The helical transmembrane segment at 212-234 (AVLLLFGASFMAFMVMKHVGFSF) threads the bilayer. Over 235–263 (NNLFSEAMAVHPKGVDIMKPGGLVKDPIS) the chain is Periplasmic. Residues 264 to 286 (ALSLGLGLMFGTAGLPHILMHFF) form a helical membrane-spanning segment. Residues 287–297 (TVSDAREARKS) are Cytoplasmic-facing. Residues 298–320 (VFYATGFMGYFYILTFIIGFGAI) traverse the membrane as a helical segment. Residues 321–358 (MLVGANPEYKDAAGHLIGGNNMAAVHLANAVGGNLFLG) are Periplasmic-facing. The chain crosses the membrane as a helical span at residues 359–381 (FISAVAFATILAVVAGLTLAGAS). At 382–401 (AVSHDLYANVFKKGATEREE) the chain is on the cytoplasmic side. A helical transmembrane segment spans residues 402-424 (LRVSKITVLILGVIAIILGVLFE). Residues 425-427 (NQN) lie on the Periplasmic side of the membrane. The helical transmembrane segment at 428–450 (IAFMVGLAFAIAASCNFPIILLS) threads the bilayer. The Cytoplasmic portion of the chain corresponds to 451-461 (MYWSKLTTRGA). Residues 462–484 (MLGGWLGLITAVVLMILGPTIWV) traverse the membrane as a helical segment. Over 485–493 (QILGHEKAI) the chain is Periplasmic. The chain crosses the membrane as a helical span at residues 494 to 516 (FPYEYPALFSISVAFLGIWLFSA). Topologically, residues 517–549 (TDNSAEGARERELFRAQFIRSQTGFGVEQGRAH) are cytoplasmic.

The protein belongs to the sodium:solute symporter (SSF) (TC 2.A.21) family.

The protein resides in the cell inner membrane. Its function is as follows. Transports acetate. The chain is Cation/acetate symporter ActP (actP) from Escherichia coli O6:H1 (strain CFT073 / ATCC 700928 / UPEC).